Reading from the N-terminus, the 264-residue chain is Virulence plasmid ParA family protein pGP5-D (264 aa).

Phenylalanine 9–threonine 16 contacts ATP.

This sequence belongs to the ParA family.

Functionally, required for growth within mammalian cells. The protein is Virulence plasmid ParA family protein pGP5-D of Chlamydia trachomatis.